Here is a 349-residue protein sequence, read N- to C-terminus: KH domain-containing, RNA-binding, signal transduction-associated protein 2 (349 aa).

Residues Leu-65–Ile-135 form the KH domain. 2 disordered regions span residues Glu-182–Thr-284 and Pro-319–Tyr-349. Arg-230 and Arg-240 each carry omega-N-methylarginine. Positions Gly-340–Tyr-349 are enriched in basic and acidic residues.

It belongs to the KHDRBS family. In terms of assembly, self-associates to form homooligomers. Interacts with KHDRBS1/SAM68; heterooligomer formation of KHDRBS family proteins may modulate RNA substrate specificity. Interacts with RBMX. Interacts with SAFB, SFRS9 and YTHDC1. Interacts with FYN and PLCG1 (via SH3 domain). Interacts (phosphorylated) with FYN, GRB2, PLCG1 and RASA1 (via SH2 domain). Post-translationally, methylated. In terms of processing, tyrosine phosphorylated by FYN, PTK6 and SRC. Tyrosine phosphorylated by SRC during mitosis. As to expression, highly expressed in brain, lung, kidney and small intestine. Weakly expressed in placenta, liver, spleen, thymus, ovary and colon.

Its subcellular location is the nucleus. Functionally, RNA-binding protein that plays a role in the regulation of alternative splicing and influences mRNA splice site selection and exon inclusion. Binds both poly(A) and poly(U) homopolymers. Phosphorylation by PTK6 inhibits its RNA-binding ability. Induces an increased concentration-dependent incorporation of exon in CD44 pre-mRNA by direct binding to purine-rich exonic enhancer. Can regulate alternative splicing of NRXN1 in the laminin G-like domain 6 containing the evolutionary conserved neurexin alternative spliced segment 4 (AS4) involved in neurexin selective targeting to postsynaptic partners. Regulates cell-type specific alternative splicing of NRXN1 at AS4 and acts synergystically with SAM68 in exon skipping. In contrast acts antagonistically with SAM68 in NRXN3 exon skipping at AS4. Its phosphorylation by FYN inhibits its ability to regulate splice site selection. May function as an adapter protein for Src kinases during mitosis. This Homo sapiens (Human) protein is KH domain-containing, RNA-binding, signal transduction-associated protein 2 (KHDRBS2).